Here is a 289-residue protein sequence, read N- to C-terminus: 4-hydroxy-3-methylbut-2-enyl diphosphate reductase (289 aa).

C13 provides a ligand contact to [4Fe-4S] cluster. 2 residues coordinate (2E)-4-hydroxy-3-methylbut-2-enyl diphosphate: H41 and H75. Dimethylallyl diphosphate-binding residues include H41 and H75. H41 and H75 together coordinate isopentenyl diphosphate. [4Fe-4S] cluster is bound at residue C97. Residue H129 participates in (2E)-4-hydroxy-3-methylbut-2-enyl diphosphate binding. A dimethylallyl diphosphate-binding site is contributed by H129. Isopentenyl diphosphate is bound at residue H129. E131 serves as the catalytic Proton donor. T167 contributes to the (2E)-4-hydroxy-3-methylbut-2-enyl diphosphate binding site. C198 is a binding site for [4Fe-4S] cluster. Residues S226, S227, N228, and S270 each coordinate (2E)-4-hydroxy-3-methylbut-2-enyl diphosphate. Dimethylallyl diphosphate contacts are provided by S226, S227, N228, and S270. Isopentenyl diphosphate-binding residues include S226, S227, N228, and S270.

The protein belongs to the IspH family. The cofactor is [4Fe-4S] cluster.

The catalysed reaction is isopentenyl diphosphate + 2 oxidized [2Fe-2S]-[ferredoxin] + H2O = (2E)-4-hydroxy-3-methylbut-2-enyl diphosphate + 2 reduced [2Fe-2S]-[ferredoxin] + 2 H(+). It carries out the reaction dimethylallyl diphosphate + 2 oxidized [2Fe-2S]-[ferredoxin] + H2O = (2E)-4-hydroxy-3-methylbut-2-enyl diphosphate + 2 reduced [2Fe-2S]-[ferredoxin] + 2 H(+). Its pathway is isoprenoid biosynthesis; dimethylallyl diphosphate biosynthesis; dimethylallyl diphosphate from (2E)-4-hydroxy-3-methylbutenyl diphosphate: step 1/1. The protein operates within isoprenoid biosynthesis; isopentenyl diphosphate biosynthesis via DXP pathway; isopentenyl diphosphate from 1-deoxy-D-xylulose 5-phosphate: step 6/6. Functionally, catalyzes the conversion of 1-hydroxy-2-methyl-2-(E)-butenyl 4-diphosphate (HMBPP) into a mixture of isopentenyl diphosphate (IPP) and dimethylallyl diphosphate (DMAPP). Acts in the terminal step of the DOXP/MEP pathway for isoprenoid precursor biosynthesis. In Bacteroides thetaiotaomicron (strain ATCC 29148 / DSM 2079 / JCM 5827 / CCUG 10774 / NCTC 10582 / VPI-5482 / E50), this protein is 4-hydroxy-3-methylbut-2-enyl diphosphate reductase.